A 593-amino-acid polypeptide reads, in one-letter code: Actin-histidine N-methyltransferase (593 aa).

Residues 1 to 21 (MGKKSRVKTQKSGTGATAAVS) are disordered. S-adenosyl-L-methionine is bound by residues arginine 75, 104-106 (EGF), arginine 254, 275-279 (DMCNH), and 325-327 (SGF). In terms of domain architecture, SET spans 94-314 (EGFEIANFEE…AGEQIYIFYG (221 aa)). Positions 549 to 593 (GFVNGENSLFNGTKSESENLIKEESNRETEDAKESSSESTDEVKE) are disordered. Residues 553-562 (GENSLFNGTK) show a composition bias toward polar residues. The span at 563–593 (SESENLIKEESNRETEDAKESSSESTDEVKE) shows a compositional bias: basic and acidic residues.

The protein belongs to the class V-like SAM-binding methyltransferase superfamily. SETD3 actin-histidine methyltransferase family.

It is found in the cytoplasm. The catalysed reaction is L-histidyl-[protein] + S-adenosyl-L-methionine = N(tele)-methyl-L-histidyl-[protein] + S-adenosyl-L-homocysteine + H(+). Functionally, protein-histidine N-methyltransferase that specifically mediates 3-methylhistidine (tele-methylhistidine) methylation of actin at 'His-73'. Does not have protein-lysine N-methyltransferase activity and probably only catalyzes histidine methylation of actin. The chain is Actin-histidine N-methyltransferase from Gallus gallus (Chicken).